The following is a 1328-amino-acid chain: ATP-dependent DNA helicase hus2/rqh1 (1328 aa).

Composition is skewed to low complexity over residues 217-236 (NNLPFPRLNNNNTNNNNDNN) and 244-254 (ASPTPSSVSSQ). The segment at 217-254 (NNLPFPRLNNNNTNNNNDNNAIEKRDSASPTPSSVSSQ) is disordered. The Helicase ATP-binding domain maps to 528-707 (INGTLSGKDV…INTLRMENCL (180 aa)). 555-562 (AVIEGGAS) contacts ATP. The DEAH box signature appears at 651–654 (DEAH). Residues 728–876 (LYTELYRFIS…ETKERQRQML (149 aa)) enclose the Helicase C-terminal domain. In terms of domain architecture, HRDC spans 1115–1195 (IDVMTRCLKD…QKFIDEKEQN (81 aa)). 2 disordered regions span residues 1224–1247 (EQGFSDDSDSVYEPSSPIEEGDEE) and 1260–1328 (NSQS…QNYR). Residues 1260 to 1269 (NSQSLTQTGS) show a composition bias toward polar residues. Residues 1283 to 1300 (KSYRHKRGSTSYSRKRKY) are compositionally biased toward basic residues.

This sequence belongs to the helicase family. RecQ subfamily. As to quaternary structure, interacts with top3.

The protein localises to the nucleus. The enzyme catalyses Couples ATP hydrolysis with the unwinding of duplex DNA by translocating in the 3'-5' direction.. The catalysed reaction is ATP + H2O = ADP + phosphate + H(+). In terms of biological role, ATP-dependent 3'-5' DNA-helicase. Has a role in the repair of UV-induced DNA damage in G2 via recombination-mediated repair. Also has a role in the repair of infrared-induced double DNA strand breaks. The sequence is that of ATP-dependent DNA helicase hus2/rqh1 from Schizosaccharomyces pombe (strain 972 / ATCC 24843) (Fission yeast).